Consider the following 1352-residue polypeptide: Stress response protein NST1 (1352 aa).

Residues 1–12 (MSSKSQQPPTGL) show a composition bias toward polar residues. Disordered stretches follow at residues 1–66 (MSSK…FFNF), 216–422 (NANA…TQSS), 503–522 (NGLR…VEVD), 531–616 (DHRA…FLSF), 651–693 (RRSV…AEEG), 726–880 (LREL…IAKE), 978–1118 (GLKS…DDAF), 1139–1275 (GSLI…GAGV), and 1307–1336 (GGTA…HQQQ). Residues 16 to 25 (AAKKRAKKAA) are compositionally biased toward basic residues. The span at 26–45 (KQSQNPQPQSAPQTSSQTPA) shows a compositional bias: low complexity. Positions 46 to 59 (SVPPLPPASVPDPL) are enriched in pro residues. A compositionally biased stretch (polar residues) spans 218–229 (NARSFPSPQQTI). Over residues 242-254 (REEEYDDEEEIEE) the composition is skewed to acidic residues. Residues 268–277 (KKNKKKKKKG) show a composition bias toward basic residues. A compositionally biased stretch (pro residues) spans 287–300 (VEPPAPLPPLPPPS). A compositionally biased stretch (low complexity) spans 317–330 (LPTHQPQPLSQQPP). A compositionally biased stretch (pro residues) spans 331 to 349 (SLNPLPPPAPASAPTPTPP). The segment covering 368 to 388 (PARSARAAGKAPASAAPPHNA) has biased composition (low complexity). The span at 531–541 (DHRAPELHDHD) shows a compositional bias: basic and acidic residues. A compositionally biased stretch (acidic residues) spans 542–583 (PDDLDGEESEEYDDDDDYADDDELDDDDIGTDEADVGDEIDE). Residues 653–664 (SVREEQNLRDMQ) show a composition bias toward basic and acidic residues. Acidic residues predominate over residues 665–680 (EETDEEEEEEDDDESR). 3 stretches are compositionally biased toward basic and acidic residues: residues 681–693 (DEPM…AEEG), 726–749 (LREL…EAQK), and 759–880 (QKAE…IAKE). Positions 712–943 (AYRERVAKQR…AAQQAQRERA (232 aa)) form a coiled coil. Over residues 1008–1020 (TNATPGRSMQKTP) the composition is skewed to polar residues. A compositionally biased stretch (pro residues) spans 1153–1164 (PTPPAPIAPPNL). 2 stretches are compositionally biased toward polar residues: residues 1173–1186 (SDGQ…LRST) and 1208–1219 (QPQQRRPTTSWD).

The protein belongs to the NST1 family.

It is found in the cytoplasm. May act as a negative regulator of salt tolerance. This is Stress response protein NST1 (NST1) from Cryptococcus neoformans var. neoformans serotype D (strain JEC21 / ATCC MYA-565) (Filobasidiella neoformans).